Reading from the N-terminus, the 578-residue chain is Putative transporter B0361.11 (578 aa).

Residues 1–30 form a disordered region; it reads MSISRRSYEQFDEMKSENQENNSKKKSSER. Transmembrane regions (helical) follow at residues 51–71, 148–168, 182–202, 232–252, 263–283, 339–359, 373–393, 399–419, 426–446, 457–477, and 486–506; these read IFTYVLVQTLNFFYSSSMYIM, FGLTIFTIGAVIAVPFMSMLA, ILAFLANMAASFSPNFAIFLI, AWITVVYNVAWSLGMVWTLLV, YFIVSLPGVYGFALWYFLPES, IWLLFANGFIEMVISLVYFAI, AFLYSSLIEIPAGLAVIPLMM, MIVIWCLVFQTLALIGVTVFL, LVIMLVAKVMATIIYSVHPIW, SLCFSLMNIPQSMGIIMSPYV, and WIPFVVIALFSFISATLAFML. Residues 532-550 show a composition bias toward low complexity; it reads AYRRSKSSSSSVSALSKTS. Residues 532–561 form a disordered region; it reads AYRRSKSSSSSVSALSKTSVRSKKTLSSES.

This sequence belongs to the major facilitator superfamily. Sugar transporter (TC 2.A.1.1) family.

It localises to the membrane. The polypeptide is Putative transporter B0361.11 (Caenorhabditis elegans).